Reading from the N-terminus, the 477-residue chain is UDP-sulfoquinovose synthase, chloroplastic (477 aa).

Residues 1–21 (MAHLLSASCPSVISLSSSSSK) form a disordered region. The N-terminal 86 residues, 1–86 (MAHLLSASCP…TNNSSSKPKR (86 aa)), are a transit peptide targeting the chloroplast. NAD(+) is bound by residues 95 to 96 (YC), 115 to 119 (DNLVR), 158 to 159 (DI), R184, and N202. Residue R184 participates in substrate binding. Substrate-binding residues include T228 and Y265. The active site involves T228. 2 residues coordinate NAD(+): Y265 and K269. Catalysis depends on Y265, which acts as the Proton acceptor. The active site involves K269. Substrate is bound at residue Q292. NAD(+) is bound at residue V295. Residues 322-325 (ALNR), 337-339 (TVY), and 410-412 (RVE) contribute to the substrate site.

It belongs to the NAD(P)-dependent epimerase/dehydratase family. Homodimer. The cofactor is NAD(+).

The protein resides in the plastid. It localises to the chloroplast. The catalysed reaction is sulfite + UDP-alpha-D-glucose + H(+) = UDP-alpha-D-6-sulfoquinovose + H2O. With respect to regulation, concentrations above 100 uM sulfite inhibit the reaction. Involved in the biosynthesis of sulfolipids found in thylakoid membranes. Converts UDP-glucose and sulfite to the sulfolipid head group precursor UDP-sulfoquinovose. This is UDP-sulfoquinovose synthase, chloroplastic (SQD1) from Arabidopsis thaliana (Mouse-ear cress).